The chain runs to 153 residues: Endoribonuclease YbeY (153 aa).

Residues His112, His116, and His122 each coordinate Zn(2+).

This sequence belongs to the endoribonuclease YbeY family. The cofactor is Zn(2+).

The protein resides in the cytoplasm. In terms of biological role, single strand-specific metallo-endoribonuclease involved in late-stage 70S ribosome quality control and in maturation of the 3' terminus of the 16S rRNA. The sequence is that of Endoribonuclease YbeY from Persephonella marina (strain DSM 14350 / EX-H1).